We begin with the raw amino-acid sequence, 84 residues long: Putative membrane protein insertion efficiency factor (84 aa).

Belongs to the UPF0161 family.

The protein localises to the cell inner membrane. Functionally, could be involved in insertion of integral membrane proteins into the membrane. The sequence is that of Putative membrane protein insertion efficiency factor from Shewanella frigidimarina (strain NCIMB 400).